The following is a 281-amino-acid chain: Acetyl-coenzyme A carboxylase carboxyl transferase subunit beta (281 aa).

Positions 23-281 (IWTKCGSCQA…SLLVKLHYKN (259 aa)) constitute a CoA carboxyltransferase N-terminal domain. Zn(2+)-binding residues include cysteine 27, cysteine 30, cysteine 46, and cysteine 49. The C4-type zinc-finger motif lies at 27–49 (CGSCQAVLYKSELEKLQEVCPKC).

It belongs to the AccD/PCCB family. As to quaternary structure, acetyl-CoA carboxylase is a heterohexamer composed of biotin carboxyl carrier protein (AccB), biotin carboxylase (AccC) and two subunits each of ACCase subunit alpha (AccA) and ACCase subunit beta (AccD). Zn(2+) is required as a cofactor.

The protein resides in the cytoplasm. The enzyme catalyses N(6)-carboxybiotinyl-L-lysyl-[protein] + acetyl-CoA = N(6)-biotinyl-L-lysyl-[protein] + malonyl-CoA. The protein operates within lipid metabolism; malonyl-CoA biosynthesis; malonyl-CoA from acetyl-CoA: step 1/1. In terms of biological role, component of the acetyl coenzyme A carboxylase (ACC) complex. Biotin carboxylase (BC) catalyzes the carboxylation of biotin on its carrier protein (BCCP) and then the CO(2) group is transferred by the transcarboxylase to acetyl-CoA to form malonyl-CoA. This is Acetyl-coenzyme A carboxylase carboxyl transferase subunit beta from Alteromonas mediterranea (strain DSM 17117 / CIP 110805 / LMG 28347 / Deep ecotype).